The primary structure comprises 251 residues: Hydroxyacylglutathione hydrolase (251 aa).

Zn(2+) contacts are provided by H53, H55, D57, H58, H110, D127, and H165.

Belongs to the metallo-beta-lactamase superfamily. Glyoxalase II family. In terms of assembly, monomer. Requires Zn(2+) as cofactor.

It carries out the reaction an S-(2-hydroxyacyl)glutathione + H2O = a 2-hydroxy carboxylate + glutathione + H(+). Its pathway is secondary metabolite metabolism; methylglyoxal degradation; (R)-lactate from methylglyoxal: step 2/2. Thiolesterase that catalyzes the hydrolysis of S-D-lactoyl-glutathione to form glutathione and D-lactic acid. The protein is Hydroxyacylglutathione hydrolase of Escherichia coli O6:K15:H31 (strain 536 / UPEC).